The sequence spans 430 residues: Adenylosuccinate synthetase (430 aa).

GTP-binding positions include 12–18 (GDEGKGK) and 40–42 (GHT). Catalysis depends on D13, which acts as the Proton acceptor. Mg(2+) contacts are provided by D13 and G40. IMP is bound by residues 13 to 16 (DEGK), 38 to 41 (NAGH), T128, R142, Q223, T238, and R302. Catalysis depends on H41, which acts as the Proton donor. 298 to 304 (TTTGRPR) contributes to the substrate binding site. GTP contacts are provided by residues R304, 330-332 (SID), and 412-414 (SVG).

Belongs to the adenylosuccinate synthetase family. Homodimer. Requires Mg(2+) as cofactor.

Its subcellular location is the cytoplasm. The enzyme catalyses IMP + L-aspartate + GTP = N(6)-(1,2-dicarboxyethyl)-AMP + GDP + phosphate + 2 H(+). The protein operates within purine metabolism; AMP biosynthesis via de novo pathway; AMP from IMP: step 1/2. Its function is as follows. Plays an important role in the de novo pathway of purine nucleotide biosynthesis. Catalyzes the first committed step in the biosynthesis of AMP from IMP. This chain is Adenylosuccinate synthetase, found in Bacillus licheniformis (strain ATCC 14580 / DSM 13 / JCM 2505 / CCUG 7422 / NBRC 12200 / NCIMB 9375 / NCTC 10341 / NRRL NRS-1264 / Gibson 46).